We begin with the raw amino-acid sequence, 341 residues long: UDP-N-acetylenolpyruvoylglucosamine reductase (341 aa).

An FAD-binding PCMH-type domain is found at 13–185 (FGVEQSCLSM…TAVGLRLPKA (173 aa)). R161 is an active-site residue. S231 acts as the Proton donor in catalysis. E327 is an active-site residue.

This sequence belongs to the MurB family. The cofactor is FAD.

The protein resides in the cytoplasm. The enzyme catalyses UDP-N-acetyl-alpha-D-muramate + NADP(+) = UDP-N-acetyl-3-O-(1-carboxyvinyl)-alpha-D-glucosamine + NADPH + H(+). The protein operates within cell wall biogenesis; peptidoglycan biosynthesis. Functionally, cell wall formation. The sequence is that of UDP-N-acetylenolpyruvoylglucosamine reductase from Shewanella sp. (strain MR-7).